The primary structure comprises 293 residues: Cell division protein FtsQ (293 aa).

Residues 1–29 are Cytoplasmic-facing; the sequence is MSQVRSKSQQGKRQAKPQEVVPATILTEQ. The chain crosses the membrane as a helical span at residues 30–52; it reads LSTYAFGTVTAGAVMVAVAAWMG. Residues 53-293 lie on the Periplasmic side of the membrane; that stretch reads GSLASIDERI…SQIDDKSGGA (241 aa). One can recognise a POTRA domain in the interval 75-144; that stretch reads FTVTKISIEG…NDIWILAENR (70 aa).

Belongs to the FtsQ/DivIB family. FtsQ subfamily.

The protein resides in the cell inner membrane. Functionally, essential cell division protein. The chain is Cell division protein FtsQ from Hirschia baltica (strain ATCC 49814 / DSM 5838 / IFAM 1418).